A 241-amino-acid polypeptide reads, in one-letter code: 6-phosphogluconolactonase (241 aa).

Belongs to the glucosamine/galactosamine-6-phosphate isomerase family. 6-phosphogluconolactonase subfamily.

The enzyme catalyses 6-phospho-D-glucono-1,5-lactone + H2O = 6-phospho-D-gluconate + H(+). Its pathway is carbohydrate degradation; pentose phosphate pathway; D-ribulose 5-phosphate from D-glucose 6-phosphate (oxidative stage): step 2/3. Hydrolysis of 6-phosphogluconolactone to 6-phosphogluconate. The protein is 6-phosphogluconolactonase (pgl) of Treponema pallidum (strain Nichols).